A 382-amino-acid polypeptide reads, in one-letter code: Porin-like protein BU359 (382 aa).

A signal peptide spans 1-23 (MTNRKSLAMVIPMLLAASNGVNA).

This sequence belongs to the Gram-negative porin family. As to quaternary structure, homotrimer.

The protein resides in the cell outer membrane. Forms pores that allow passive diffusion of small molecules across the membrane. This is Porin-like protein BU359 from Buchnera aphidicola subsp. Acyrthosiphon pisum (strain APS) (Acyrthosiphon pisum symbiotic bacterium).